The chain runs to 349 residues: Twinfilin-2 (349 aa).

Ala2 is modified (N-acetylalanine). ADF-H domains are found at residues 4–139 (QTGI…KHLS) and 177–313 (GLAF…DEVH). An N6-acetyllysine modification is found at Lys14. Tyr309 is subject to Phosphotyrosine. Residues 322–349 (AFAKPKGPGGKRGHKRLIRGPGENGDDS) are disordered. Residues 330–339 (GGKRGHKRLI) show a composition bias toward basic residues. A Phosphoserine modification is found at Ser349.

This sequence belongs to the actin-binding proteins ADF family. Twinfilin subfamily. As to quaternary structure, interacts with G-actin; ADP-actin form and capping protein (CP). May also be able to interact with TWF1 and phosphoinositides, PI(4,5)P2. When bound to PI(4,5)P2, it is down-regulated. Interacts with MYO7A. Post-translationally, in vitro, phosphorylated by PRKCZ, CK2 and SRC. Ubiquitously expressed (at protein level).

The protein localises to the cytoplasm. It is found in the cytoskeleton. The protein resides in the perinuclear region. Its subcellular location is the cell projection. It localises to the stereocilium. Actin-binding protein involved in motile and morphological processes. Inhibits actin polymerization, likely by sequestering G-actin. By capping the barbed ends of filaments, it also regulates motility. Seems to play an important role in clathrin-mediated endocytosis and distribution of endocytic organelles. May play a role in regulating the mature length of the middle and short rows of stereocilia. The sequence is that of Twinfilin-2 (TWF2) from Homo sapiens (Human).